Here is a 592-residue protein sequence, read N- to C-terminus: Solute carrier family 13 member 2 (592 aa).

A run of 4 helical transmembrane segments spans residues 13 to 33 (SYLI…LVPS), 53 to 73 (ALPL…MGIV), 86 to 106 (SNLL…WNLH), and 114 to 134 (LLIV…VTAF). Over residues 165-177 (SSNVEEGSNNPTF) the composition is skewed to polar residues. The interval 165-185 (SSNVEEGSNNPTFELQEPSPQ) is disordered. 8 helical membrane passes run 221–241 (MSLC…TGTA), 274–294 (MVIL…GFNF), 324–344 (PMTF…LLWF), 371–391 (GTVA…FPGL), 450–470 (PLQS…VATF), 482–502 (IFLP…LYVM), 511–531 (LAFM…FGDL), and 545–565 (IIGV…LFSL).

This sequence belongs to the SLC13A/DASS transporter (TC 2.A.47) family. NADC subfamily. As to expression, expressed in kidney and intestine. In kidney expressed in the proximal tubule (at protein level).

It is found in the apical cell membrane. It carries out the reaction succinate(out) + 3 Na(+)(out) = succinate(in) + 3 Na(+)(in). It catalyses the reaction fumarate(out) + 3 Na(+)(out) = fumarate(in) + 3 Na(+)(in). The enzyme catalyses 2-oxoglutarate(out) + 3 Na(+)(out) = 2-oxoglutarate(in) + 3 Na(+)(in). With respect to regulation, li(+) decreases succinate transport in the presence of Na(+), by competing at one of the three cation binding sites. Functionally, low-affinity sodium-dicarboxylate cotransporter, that mediates the entry of citric acid cycle intermediates, such as succinate, citrate, fumarate and alpha-ketoglutarate (2-oxoglutarate) into the small intestine and renal proximal tubule. Transports the dicarboxylate into the cell with a probable stoichiometry of 3 Na(+) for 1 divalent dicarboxylate, rendering the process electrogenic. Citrate is transported in protonated form as a divalent anion, rather than the trivalent form which is normally found in blood. Has a critical role in renal dicarboxylate transport. In Homo sapiens (Human), this protein is Solute carrier family 13 member 2 (SLC13A2).